Reading from the N-terminus, the 160-residue chain is Ribosomal RNA large subunit methyltransferase H (160 aa).

S-adenosyl-L-methionine-binding positions include Leu77, Gly109, and 128–133; that span reads FGRITL.

Belongs to the RNA methyltransferase RlmH family. As to quaternary structure, homodimer.

The protein localises to the cytoplasm. It carries out the reaction pseudouridine(1915) in 23S rRNA + S-adenosyl-L-methionine = N(3)-methylpseudouridine(1915) in 23S rRNA + S-adenosyl-L-homocysteine + H(+). Functionally, specifically methylates the pseudouridine at position 1915 (m3Psi1915) in 23S rRNA. The polypeptide is Ribosomal RNA large subunit methyltransferase H (Oenococcus oeni (strain ATCC BAA-331 / PSU-1)).